We begin with the raw amino-acid sequence, 84 residues long: Small ribosomal subunit protein bS20 (84 aa).

Residues 1–22 (MPAPTKRERQNRKRFERNRSVR) are disordered. Residues 9–22 (RQNRKRFERNRSVR) show a composition bias toward basic residues.

This sequence belongs to the bacterial ribosomal protein bS20 family.

Its function is as follows. Binds directly to 16S ribosomal RNA. The sequence is that of Small ribosomal subunit protein bS20 from Rubrobacter xylanophilus (strain DSM 9941 / JCM 11954 / NBRC 16129 / PRD-1).